The sequence spans 100 residues: Small ribosomal subunit protein uS14c (100 aa).

Belongs to the universal ribosomal protein uS14 family. In terms of assembly, part of the 30S ribosomal subunit.

Its subcellular location is the plastid. It is found in the chloroplast. In terms of biological role, binds 16S rRNA, required for the assembly of 30S particles. The polypeptide is Small ribosomal subunit protein uS14c (Carica papaya (Papaya)).